The following is a 490-amino-acid chain: Scarecrow-like transcription factor PAT1 (490 aa).

The region spanning 110-490 (TLEAISRRDL…RDLVASCAWK (381 aa)) is the GRAS domain. A leucine repeat I (LRI) region spans residues 117–178 (RDLRADLVSC…AQLASSGSSI (62 aa)). Residues 197–262 (MHILYEVCPY…GGPPRIRITG (66 aa)) form a VHIID region. The VHIID signature appears at 228–232 (VHIID). The leucine repeat II (LRII) stretch occupies residues 278-310 (IVGNRLAKLAKQFNVPFEFNSVSVSVSEVKPKN). The PFYRE stretch occupies residues 319-413 (LAVNFAFVLH…QHCLARDVVN (95 aa)). Residues 416–490 (ACEGADRVER…RDLVASCAWK (75 aa)) form an SAW region.

It belongs to the GRAS family.

Its subcellular location is the cytoplasm. Functionally, probable transcription factor involved in phytochrome A (phyA) signal transduction. The protein is Scarecrow-like transcription factor PAT1 (PAT1) of Arabidopsis thaliana (Mouse-ear cress).